Consider the following 231-residue polypeptide: NADH-ubiquinone oxidoreductase chain 4 (231 aa).

The next 6 membrane-spanning stretches (helical) occupy residues 1–21, 34–54, 63–85, 89–111, 128–148, and 169–189; these read PIAG…YGII, MFLP…LTCL, IAYS…TPWG, ALAL…NTTY, ILPM…AIPP, and TIIM…HMFL.

This sequence belongs to the complex I subunit 4 family.

The protein resides in the mitochondrion membrane. It carries out the reaction a ubiquinone + NADH + 5 H(+)(in) = a ubiquinol + NAD(+) + 4 H(+)(out). Core subunit of the mitochondrial membrane respiratory chain NADH dehydrogenase (Complex I) that is believed to belong to the minimal assembly required for catalysis. Complex I functions in the transfer of electrons from NADH to the respiratory chain. The immediate electron acceptor for the enzyme is believed to be ubiquinone. The protein is NADH-ubiquinone oxidoreductase chain 4 (MT-ND4) of Bothrocophias hyoprora (Amazonian hognose viper).